We begin with the raw amino-acid sequence, 133 residues long: Histone H2A.1 (133 aa).

Residues 1–23 (MSTTGKGGKAKGKTASSKQVSRS) are disordered. Ser2 is modified (N-acetylserine). N6-acetyllysine is present on residues Lys6, Lys9, Lys11, Lys13, and Lys18. Phosphoserine is present on Ser123. A Glycyl lysine isopeptide (Lys-Gly) (interchain with G-Cter in ubiquitin) cross-link involves residue Lys124.

The protein belongs to the histone H2A family. The nucleosome is a histone octamer containing two molecules each of H2A, H2B, H3 and H4 assembled in one H3-H4 heterotetramer and two H2A-H2B heterodimers. The octamer wraps approximately 147 bp of DNA. Monoubiquitination of Lys-124 gives a specific tag for epigenetic transcriptional repression. In terms of processing, acetylation occurs almost exclusively in the MAC.

The protein resides in the nucleus. It localises to the chromosome. Core component of nucleosome. Nucleosomes wrap and compact DNA into chromatin, limiting DNA accessibility to the cellular machineries which require DNA as a template. Histones thereby play a central role in transcription regulation, DNA repair, DNA replication and chromosomal stability. DNA accessibility is regulated via a complex set of post-translational modifications of histones, also called histone code, and nucleosome remodeling. In Tetrahymena thermophila (strain SB210), this protein is Histone H2A.1 (HTA2).